The primary structure comprises 249 residues: Small ribosomal subunit protein uS3 (249 aa).

A KH type-2 domain is found at 38-106; the sequence is IRDFLSKGLE…QVQLNILEVK (69 aa). The segment covering 218–233 has biased composition (basic and acidic residues); the sequence is ARDDRGSRRGRNDRPR. The tract at residues 218–249 is disordered; the sequence is ARDDRGSRRGRNDRPRRGGGRRRRAAEQKQEG.

The protein belongs to the universal ribosomal protein uS3 family. Part of the 30S ribosomal subunit. Forms a tight complex with proteins S10 and S14.

Binds the lower part of the 30S subunit head. Binds mRNA in the 70S ribosome, positioning it for translation. This is Small ribosomal subunit protein uS3 from Corynebacterium kroppenstedtii (strain DSM 44385 / JCM 11950 / CIP 105744 / CCUG 35717).